The sequence spans 656 residues: Leucine-rich repeat-containing protein 43 (656 aa).

Acidic residues predominate over residues 1–13 (MEASYESESESES). The tract at residues 1 to 25 (MEASYESESESESEAGPGTQRPGTG) is disordered. LRR repeat units follow at residues 150 to 170 (KLEE…TNLP), 172 to 193 (TLKV…CAHP), 196 to 215 (GLQH…ESLY), and 223 to 244 (NLVS…VTSL). The LRRCT domain occupies 258–296 (NPLALVPYYRGLTIDSLAQLCVLDDITVSPNEKHLFRGL). The segment at 512-554 (LSAKKGKGEKDKKGKEKDRTGKGEKEPAKEWKVLKKKKEPPKE) is disordered. Residues 517–544 (GKGEKDKKGKEKDRTGKGEKEPAKEWKV) are compositionally biased toward basic and acidic residues.

In Homo sapiens (Human), this protein is Leucine-rich repeat-containing protein 43 (LRRC43).